The primary structure comprises 61 residues: Photosystem II reaction center X protein (61 aa).

The helical transmembrane segment at 26–46 (IGSFIAAALLIVVPATAFLIF) threads the bilayer.

This sequence belongs to the PsbX family. Type 2 subfamily. As to quaternary structure, PSII consists of a core antenna complex that captures photons, and an electron transfer chain that converts photonic excitation into a charge separation. PSII forms dimeric complexes.

It is found in the cellular thylakoid membrane. Functionally, involved in the binding and/or turnover of quinones at the Q(B) site of Photosystem II. This Prochlorococcus marinus (strain AS9601) protein is Photosystem II reaction center X protein.